Consider the following 29-residue polypeptide: Cyclotide mela-7 (29 aa).

The segment at residues G1–N29 is a cross-link (cyclopeptide (Gly-Asn)). Disulfide bonds link C5–C19, C9–C21, and C14–C26.

In terms of processing, this is a cyclic peptide. Post-translationally, contains 3 disulfide bonds.

Functionally, probably participates in a plant defense mechanism (Potential). Binds to and induces leakage in phospholipd membranes, particularly ones containing 1-palmitoyl-2-oleophosphatidylethanolamine (POPE). In vitro, displays cytotoxicity against cultured cells but no hemolytic activity towards fresh erythrocytes. Not active against Gram-negative bacterium E.coli ATCC 25922 or Gram-positive bacterium S.aureus ATCC 25923 up to a concentration of 64 uM. This is Cyclotide mela-7 from Melicytus latifolius (Norfolk Island mahoe).